The primary structure comprises 433 residues: Glutamate-1-semialdehyde 2,1-aminomutase (433 aa).

Lys271 is modified (N6-(pyridoxal phosphate)lysine).

Belongs to the class-III pyridoxal-phosphate-dependent aminotransferase family. HemL subfamily. In terms of assembly, homodimer. The cofactor is pyridoxal 5'-phosphate.

The protein resides in the cytoplasm. The enzyme catalyses (S)-4-amino-5-oxopentanoate = 5-aminolevulinate. Its pathway is porphyrin-containing compound metabolism; protoporphyrin-IX biosynthesis; 5-aminolevulinate from L-glutamyl-tRNA(Glu): step 2/2. It participates in porphyrin-containing compound metabolism; chlorophyll biosynthesis. This chain is Glutamate-1-semialdehyde 2,1-aminomutase, found in Prochlorococcus marinus subsp. pastoris (strain CCMP1986 / NIES-2087 / MED4).